The primary structure comprises 92 residues: uncharacterized protein (92 aa).

Residues 24–89 (KQIVLKVKEM…AIHKLKYTAE (66 aa)) enclose the HMA domain. A metal cation is bound by residues C35 and C38.

This is an uncharacterized protein from Haemophilus influenzae (strain ATCC 51907 / DSM 11121 / KW20 / Rd).